The chain runs to 373 residues: tRNA-specific 2-thiouridylase MnmA (373 aa).

ATP-binding positions include 12 to 19 (GMSGGVDS) and M38. The tract at residues 98–100 (NPD) is interaction with target base in tRNA. The active-site Nucleophile is C103. C103 and C200 are joined by a disulfide. G127 lines the ATP pocket. Positions 150 to 152 (KDQ) are interaction with tRNA. C200 functions as the Cysteine persulfide intermediate in the catalytic mechanism. Residues 312-313 (RY) are interaction with tRNA.

The protein belongs to the MnmA/TRMU family.

Its subcellular location is the cytoplasm. It catalyses the reaction S-sulfanyl-L-cysteinyl-[protein] + uridine(34) in tRNA + AH2 + ATP = 2-thiouridine(34) in tRNA + L-cysteinyl-[protein] + A + AMP + diphosphate + H(+). Catalyzes the 2-thiolation of uridine at the wobble position (U34) of tRNA, leading to the formation of s(2)U34. This is tRNA-specific 2-thiouridylase MnmA from Streptococcus pyogenes serotype M2 (strain MGAS10270).